The following is an 81-amino-acid chain: ATP synthase subunit C, cyanelle (81 aa).

Transmembrane regions (helical) follow at residues 7–27 and 57–77; these read AASV…PGIG and LAFM…LLFA.

The protein belongs to the ATPase C chain family. In terms of assembly, F-type ATPases have 2 components, F(1) - the catalytic core - and F(0) - the membrane proton channel. F(1) has five subunits: alpha(3), beta(3), gamma(1), delta(1), epsilon(1). F(0) has four main subunits: a(1), b(1), b'(1) and c(10-14). The alpha and beta chains form an alternating ring which encloses part of the gamma chain. F(1) is attached to F(0) by a central stalk formed by the gamma and epsilon chains, while a peripheral stalk is formed by the delta, b and b' chains.

Its subcellular location is the plastid. It is found in the cyanelle thylakoid membrane. F(1)F(0) ATP synthase produces ATP from ADP in the presence of a proton or sodium gradient. F-type ATPases consist of two structural domains, F(1) containing the extramembraneous catalytic core and F(0) containing the membrane proton channel, linked together by a central stalk and a peripheral stalk. During catalysis, ATP synthesis in the catalytic domain of F(1) is coupled via a rotary mechanism of the central stalk subunits to proton translocation. In terms of biological role, key component of the F(0) channel; it plays a direct role in translocation across the membrane. A homomeric c-ring of between 10-14 subunits forms the central stalk rotor element with the F(1) delta and epsilon subunits. In Cyanophora paradoxa, this protein is ATP synthase subunit C, cyanelle.